We begin with the raw amino-acid sequence, 516 residues long: AMP phosphorylase (516 aa).

AMP contacts are provided by residues G169, 195–200, and T204; that span reads SRAITG. Residue D257 is the Proton donor of the active site. Residues S265 and K289 each contribute to the AMP site.

This sequence belongs to the thymidine/pyrimidine-nucleoside phosphorylase family. Type 2 subfamily.

The enzyme catalyses AMP + phosphate = alpha-D-ribose 1,5-bisphosphate + adenine. The catalysed reaction is CMP + phosphate = cytosine + alpha-D-ribose 1,5-bisphosphate. It carries out the reaction UMP + phosphate = alpha-D-ribose 1,5-bisphosphate + uracil. Functionally, catalyzes the conversion of AMP and phosphate to adenine and ribose 1,5-bisphosphate (R15P). Exhibits phosphorylase activity toward CMP and UMP in addition to AMP. Functions in an archaeal AMP degradation pathway, together with R15P isomerase and RubisCO. This Methanospirillum hungatei JF-1 (strain ATCC 27890 / DSM 864 / NBRC 100397 / JF-1) protein is AMP phosphorylase.